We begin with the raw amino-acid sequence, 392 residues long: Phosphopentomutase (392 aa).

Residues aspartate 15, aspartate 287, histidine 292, aspartate 328, histidine 329, and histidine 340 each contribute to the Mn(2+) site.

The protein belongs to the phosphopentomutase family. Mn(2+) is required as a cofactor.

The protein resides in the cytoplasm. It catalyses the reaction 2-deoxy-alpha-D-ribose 1-phosphate = 2-deoxy-D-ribose 5-phosphate. The enzyme catalyses alpha-D-ribose 1-phosphate = D-ribose 5-phosphate. It functions in the pathway carbohydrate degradation; 2-deoxy-D-ribose 1-phosphate degradation; D-glyceraldehyde 3-phosphate and acetaldehyde from 2-deoxy-alpha-D-ribose 1-phosphate: step 1/2. Isomerase that catalyzes the conversion of deoxy-ribose 1-phosphate (dRib-1-P) and ribose 1-phosphate (Rib-1-P) to deoxy-ribose 5-phosphate (dRib-5-P) and ribose 5-phosphate (Rib-5-P), respectively. This chain is Phosphopentomutase, found in Syntrophotalea carbinolica (strain DSM 2380 / NBRC 103641 / GraBd1) (Pelobacter carbinolicus).